A 274-amino-acid polypeptide reads, in one-letter code: MNKTAIALLALLASSASLAATPWQKITQPVPGSAQSIGSFSNGCIVGADTLPIQSEHYQVMRTDQRRYFGHPDLVMFIQRLSSQVSNLGMGTVLIGDMGMPAGGRFNGGHASHQTGLDVDIFLQLPKTRWTSAQLLRPQALDLVSRDGKHVVSTLWKPEIFSLIKLAAQDKDVTRIFVNPAIKQQLCLDAGTDRDWLRKVRPWFQHRAHMHVRLRCPADSLECEDQPLPPPGDGCGAELQSWFAPPKPGTTKPEKKTPPPLPPSCQALLDEHVI.

An N-terminal signal peptide occupies residues 1–19 (MNKTAIALLALLASSASLA). 3 disulfide bridges follow: C44–C265, C187–C235, and C216–C223. Zn(2+) contacts are provided by H110, H113, D120, D147, H150, and H211. A disordered region spans residues 228 to 265 (LPPPGDGCGAELQSWFAPPKPGTTKPEKKTPPPLPPSC).

It belongs to the peptidase M74 family. Dimer. Zn(2+) is required as a cofactor.

It localises to the periplasm. Murein endopeptidase that cleaves the D-alanyl-meso-2,6-diamino-pimelyl amide bond that connects peptidoglycan strands. Likely plays a role in the removal of murein from the sacculus. The protein is Penicillin-insensitive murein endopeptidase of Shigella boydii serotype 18 (strain CDC 3083-94 / BS512).